The sequence spans 164 residues: Small ribosomal subunit protein uS5 (164 aa).

Residues 11–74 enclose the S5 DRBM domain; it reads LKEKLISVNR…EKARKNMIII (64 aa).

It belongs to the universal ribosomal protein uS5 family. Part of the 30S ribosomal subunit. Contacts proteins S4 and S8.

Its function is as follows. With S4 and S12 plays an important role in translational accuracy. Located at the back of the 30S subunit body where it stabilizes the conformation of the head with respect to the body. This is Small ribosomal subunit protein uS5 from Buchnera aphidicola subsp. Cinara cedri (strain Cc).